Here is a 48-residue protein sequence, read N- to C-terminus: 4-carboxymuconolactone decarboxylase (48 aa).

The protein belongs to the carboxymuconolactone decarboxylase family.

The catalysed reaction is (R)-2-(carboxymethyl)-5-oxo-2,5-dihydro-2-furoate + H(+) = (4,5-dihydro-5-oxofuran-2-yl)-acetate + CO2. It participates in aromatic compound metabolism; beta-ketoadipate pathway; 5-oxo-4,5-dihydro-2-furylacetate from 3-carboxy-cis,cis-muconate: step 2/2. The polypeptide is 4-carboxymuconolactone decarboxylase (Pseudomonas putida (Arthrobacter siderocapsulatus)).